A 380-amino-acid chain; its full sequence is Histidinol-phosphate aminotransferase (380 aa).

N6-(pyridoxal phosphate)lysine is present on Lys-235.

This sequence belongs to the class-II pyridoxal-phosphate-dependent aminotransferase family. Histidinol-phosphate aminotransferase subfamily. Homodimer. Pyridoxal 5'-phosphate is required as a cofactor.

The catalysed reaction is L-histidinol phosphate + 2-oxoglutarate = 3-(imidazol-4-yl)-2-oxopropyl phosphate + L-glutamate. It functions in the pathway amino-acid biosynthesis; L-histidine biosynthesis; L-histidine from 5-phospho-alpha-D-ribose 1-diphosphate: step 7/9. The protein is Histidinol-phosphate aminotransferase of Rhodococcus opacus (strain B4).